A 260-amino-acid polypeptide reads, in one-letter code: Neuraminyllactose-binding hemagglutinin (260 aa).

An N-terminal signal peptide occupies residues 1-27 (MKTNGHFKDFAWKKCLLGASVGALLVG). Cysteine 28 is lipidated: N-palmitoyl cysteine. Residue cysteine 28 is the site of S-diacylglycerol cysteine attachment. Residues 134–139 (KRTIQK) form an N-acetyl-neuraminyl-alpha(2,3)-lactose binding motif region.

It localises to the cell outer membrane. The sequence is that of Neuraminyllactose-binding hemagglutinin (hpaA) from Helicobacter pylori (Campylobacter pylori).